A 261-amino-acid chain; its full sequence is Putative ketoacyl reductase (261 aa).

NADP(+) is bound by residues Thr-15, Ser-16, Ile-18, Arg-38, Gly-39, Asp-63, Val-64, Asn-90, Tyr-157, Lys-161, Val-190, and Thr-192. Tyr-157 functions as the Proton acceptor in the catalytic mechanism.

It belongs to the short-chain dehydrogenases/reductases (SDR) family. Homotetramer.

It participates in antibiotic biosynthesis; actinorhodin biosynthesis. The polypeptide is Putative ketoacyl reductase (actIII) (Streptomyces coelicolor (strain ATCC BAA-471 / A3(2) / M145)).